Consider the following 63-residue polypeptide: Large ribosomal subunit protein uL29 (63 aa).

The protein belongs to the universal ribosomal protein uL29 family.

This is Large ribosomal subunit protein uL29 from Edwardsiella ictaluri (strain 93-146).